The chain runs to 351 residues: MTEMSFLSSEVLVGDLMSPFDQSGLGAEESLGLLDDYLEVAKHFKPHGFSSDKAKAGSSEWLAVDGLVSPSNNSKEDAFSGTDWMLEKMDLKEFDLDALLGIDDLETMPDDLLTTLDDTCDLFAPLVQETNKQPPQTVNPIGHLPESLTKPDQVAPFTFLQPLPLSPGVLSSTPDHSFSLELGSEVDITEGDRKPDYTAYVAMIPQCIKEEDTPSDNDSGICMSPESYLGSPQHSPSTRGSPNRSLPSPGVLCGSARPKPYDPPGEKMVAAKVKGEKLDKKLKKMEQNKTAATRYRQKKRAEQEALTGECKELEKKNEALKERADSLAKEIQYLKDLIEEVRKARGKKRVP.

Residue K53 forms a Glycyl lysine isopeptide (Lys-Gly) (interchain with G-Cter in SUMO2) linkage. The segment at 210–268 (EEDTPSDNDSGICMSPESYLGSPQHSPSTRGSPNRSLPSPGVLCGSARPKPYDPPGEKM) is disordered. Residue T213 is modified to Phosphothreonine. At S215 the chain carries Phosphoserine; by CK2. A BetaTrCP degron motif motif is present at residues 215–224 (SDNDSGICMS). Residues S219, S224, S231, and S235 each carry the phosphoserine modification. The segment covering 230 to 246 (GSPQHSPSTRGSPNRSL) has biased composition (polar residues). Residue P236 is modified to 4-hydroxyproline. Phosphoserine; by RPS6KA3 is present on S245. S248 bears the Phosphoserine mark. Glycyl lysine isopeptide (Lys-Gly) (interchain with G-Cter in SUMO2) cross-links involve residues K259, K267, and K272. In terms of domain architecture, bZIP spans 278–341 (LDKKLKKMEQ…QYLKDLIEEV (64 aa)). A basic motif region spans residues 280 to 300 (KKLKKMEQNKTAATRYRQKKR). Residues 280 to 340 (KKLKKMEQNK…IQYLKDLIEE (61 aa)) adopt a coiled-coil conformation. The segment at 305–341 (ALTGECKELEKKNEALKERADSLAKEIQYLKDLIEEV) is interaction with GABBR1. Positions 306-334 (LTGECKELEKKNEALKERADSLAKEIQYL) are leucine-zipper. Position 311 is an N6-acetyllysine (K311).

It belongs to the bZIP family. As to quaternary structure, binds DNA as a homodimer and as a heterodimer. Heterodimer; heterodimerizes with CEBPB. Heterodimer; heterodimerizes with DDIT3/CHOP. Interacts with CEP290 (via an N-terminal region). Interacts with NEK6, DAPK2 (isoform 2) and ZIPK/DAPK3. Interacts (via its leucine zipper domain) with GABBR1 and GABBR2 (via their C-termini). Forms a heterodimer with TXLNG in osteoblasts. Interacts (via its DNA binding domain) with FOXO1 (C-terminal half); the interaction occurs in osteoblasts and regulates glucose homeostasis through suppression of beta-cell proliferation and a decrease in insulin production. Interacts with SATB2; the interaction results in enhanced DNA binding and transactivation by these transcription factors. Interacts with ABRAXAS2. Interacts with TRIB3, inhibiting the transactivation activity of ATF4. Interacts with DISC1; which inhibits ATF4 transcription factor activity by disrupting ATF4 dimerization and DNA-binding. Interacts with EP300/p300; EP300/p300 stabilizes ATF4 and increases its transcriptional activity independently of its catalytic activity by preventing its ubiquitination. In terms of processing, ubiquitinated by SCF(BTRC) in response to mTORC1 signal, followed by proteasomal degradation and leading to down-regulate expression of SIRT4. Interaction with EP300/p300 inhibits ubiquitination by SCF(BTRC). Post-translationally, phosphorylation at Ser-245 by RPS6KA3/RSK2 in osteoblasts enhances transactivation activity and promotes osteoblast differentiation. Phosphorylated on the betaTrCP degron motif at Ser-219, followed by phosphorylation at Thr-213, Ser-224, Ser-231, Ser-235 and Ser-248, promoting interaction with BTRC and ubiquitination. Phosphorylation is promoted by mTORC1. Phosphorylation at Ser-215 by CK2 decreases its stability. Phosphorylated by NEK6. Hydroxylated by PHD3, leading to decreased protein stability.

It localises to the nucleus. The protein resides in the nucleus speckle. The protein localises to the cytoplasm. It is found in the cell membrane. Its subcellular location is the cytoskeleton. It localises to the microtubule organizing center. The protein resides in the centrosome. In terms of biological role, transcription factor that binds the cAMP response element (CRE) (consensus: 5'-GTGACGT[AC][AG]-3') and displays two biological functions, as regulator of metabolic and redox processes under normal cellular conditions, and as master transcription factor during integrated stress response (ISR). Binds to asymmetric CRE's as a heterodimer and to palindromic CRE's as a homodimer. Core effector of the ISR, which is required for adaptation to various stress such as endoplasmic reticulum (ER) stress, amino acid starvation, mitochondrial stress or oxidative stress. During ISR, ATF4 translation is induced via an alternative ribosome translation re-initiation mechanism in response to EIF2S1/eIF-2-alpha phosphorylation, and stress-induced ATF4 acts as a master transcription factor of stress-responsive genes in order to promote cell recovery. Promotes the transcription of genes linked to amino acid sufficiency and resistance to oxidative stress to protect cells against metabolic consequences of ER oxidation. Activates the transcription of NLRP1, possibly in concert with other factors in response to ER stress. Activates the transcription of asparagine synthetase (ASNS) in response to amino acid deprivation or ER stress. However, when associated with DDIT3/CHOP, the transcriptional activation of the ASNS gene is inhibited in response to amino acid deprivation. Together with DDIT3/CHOP, mediates programmed cell death by promoting the expression of genes involved in cellular amino acid metabolic processes, mRNA translation and the terminal unfolded protein response (terminal UPR), a cellular response that elicits programmed cell death when ER stress is prolonged and unresolved. Activates the expression of COX7A2L/SCAF1 downstream of the EIF2AK3/PERK-mediated unfolded protein response, thereby promoting formation of respiratory chain supercomplexes and increasing mitochondrial oxidative phosphorylation. Together with DDIT3/CHOP, activates the transcription of the IRS-regulator TRIB3 and promotes ER stress-induced neuronal cell death by regulating the expression of BBC3/PUMA in response to ER stress. May cooperate with the UPR transcriptional regulator QRICH1 to regulate ER protein homeostasis which is critical for cell viability in response to ER stress. In the absence of stress, ATF4 translation is at low levels and it is required for normal metabolic processes such as embryonic lens formation, fetal liver hematopoiesis, bone development and synaptic plasticity. Acts as a regulator of osteoblast differentiation in response to phosphorylation by RPS6KA3/RSK2: phosphorylation in osteoblasts enhances transactivation activity and promotes expression of osteoblast-specific genes and post-transcriptionally regulates the synthesis of Type I collagen, the main constituent of the bone matrix. Cooperates with FOXO1 in osteoblasts to regulate glucose homeostasis through suppression of beta-cell production and decrease in insulin production. Activates transcription of SIRT4. Regulates the circadian expression of the core clock component PER2 and the serotonin transporter SLC6A4. Binds in a circadian time-dependent manner to the cAMP response elements (CRE) in the SLC6A4 and PER2 promoters and periodically activates the transcription of these genes. Mainly acts as a transcriptional activator in cellular stress adaptation, but it can also act as a transcriptional repressor: acts as a regulator of synaptic plasticity by repressing transcription, thereby inhibiting induction and maintenance of long-term memory. Regulates synaptic functions via interaction with DISC1 in neurons, which inhibits ATF4 transcription factor activity by disrupting ATF4 dimerization and DNA-binding. Functionally, (Microbial infection) Binds to a Tax-responsive enhancer element in the long terminal repeat of HTLV-I. This chain is Cyclic AMP-dependent transcription factor ATF-4, found in Homo sapiens (Human).